Here is a 189-residue protein sequence, read N- to C-terminus: dCTP deaminase (189 aa).

DCTP is bound by residues 112 to 117, 136 to 138, glutamine 157, tyrosine 171, and glutamine 181; these read KSTYAR and TLE. Glutamate 138 acts as the Proton donor/acceptor in catalysis.

Belongs to the dCTP deaminase family. Homotrimer.

It catalyses the reaction dCTP + H2O + H(+) = dUTP + NH4(+). The protein operates within pyrimidine metabolism; dUMP biosynthesis; dUMP from dCTP (dUTP route): step 1/2. Its function is as follows. Catalyzes the deamination of dCTP to dUTP. The sequence is that of dCTP deaminase from Xanthomonas axonopodis pv. citri (strain 306).